The chain runs to 356 residues: Galactosylgalactosylxylosylprotein 3-beta-glucuronosyltransferase sqv-8 (356 aa).

Residues 1 to 9 (MFPSRLLEK) lie on the Cytoplasmic side of the membrane. The chain crosses the membrane as a helical; Signal-anchor for type II membrane protein span at residues 10-30 (WWLRAFIALVIFFVWQLFYAI). Topologically, residues 31–356 (NRVQSLEEER…LEAHALGVDN (326 aa)) are lumenal. Asn93 and Asn173 each carry an N-linked (GlcNAc...) asparagine glycan. Residue Asp208 participates in Mn(2+) binding. Asn246 and Asn272 each carry an N-linked (GlcNAc...) asparagine glycan. Glu294 functions as the Proton acceptor in the catalytic mechanism.

It belongs to the glycosyltransferase 43 family.

The protein resides in the membrane. The enzyme catalyses 3-O-(beta-D-galactosyl-(1-&gt;3)-beta-D-galactosyl-(1-&gt;4)-beta-D-xylosyl)-L-seryl-[protein] + UDP-alpha-D-glucuronate = 3-O-(beta-D-GlcA-(1-&gt;3)-beta-D-Gal-(1-&gt;3)-beta-D-Gal-(1-&gt;4)-beta-D-Xyl)-L-seryl-[protein] + UDP + H(+). In terms of biological role, glycosyltransferase required for the biosynthesis of the tetrasaccharide (GlcA-Gal-Gal-Xyl-)Ser core linker of heparan sulfate and chondroitin sulfate. May be involved in the biosynthesis of the HNK-1 carbohydrate epitope on glycoproteins. Required for embryonic development. Involved in the elongation of the pharyngeal isthmus during the later stages of embryonic development. Involved in vulval epithelium invagination. The polypeptide is Galactosylgalactosylxylosylprotein 3-beta-glucuronosyltransferase sqv-8 (sqv-8) (Caenorhabditis elegans).